The primary structure comprises 356 residues: MITKQQVLEFLKNYDLDNITIATVCSHSSLQIFDGARKEGFRTMGICVGKPPKFYEAFPRAKPDEYLIVESYEDIMNKVEELRKKNVIIIPHGSFVAYLGTENFAEMAVPTFGNRAVLEWESDRSKEREWLLGAGIHMPGKIDDPRDINGPVMVKYDGAKGGKGFFVAKTYEEFDELVDRTQKYTIQEFITGTRYYLHYFYSPIRNEGYTLSEGSLELLSMDRRVESNADEIFRLGSPRELIEAGIRPTYVVTGNVPLVARESLLPLIFSLGERVVEESLGLFGGMIGAFCLETVFTDELEIKVFEISARIVAGTNLYISGSPYADLIQEDLSTGRRIAQEIKEAVRKNQLDKIIS.

5-amino-1-(5-phospho-beta-D-ribosyl)imidazole-4-carboxamide is bound by residues H27 and S94. The ATP-grasp domain maps to 101 to 333; that stretch reads TENFAEMAVP…YADLIQEDLS (233 aa). ATP contacts are provided by residues 145 to 196 and E226; that span reads PRDI…TRYY. Residue N255 participates in 5-amino-1-(5-phospho-beta-D-ribosyl)imidazole-4-carboxamide binding. Positions 293 and 306 each coordinate Mg(2+).

Belongs to the phosphohexose mutase family. Requires Mg(2+) as cofactor. Mn(2+) is required as a cofactor.

It carries out the reaction 5-amino-1-(5-phospho-beta-D-ribosyl)imidazole-4-carboxamide + formate + ATP = 5-formamido-1-(5-phospho-D-ribosyl)imidazole-4-carboxamide + ADP + phosphate. The protein operates within purine metabolism; IMP biosynthesis via de novo pathway; 5-formamido-1-(5-phospho-D-ribosyl)imidazole-4-carboxamide from 5-amino-1-(5-phospho-D-ribosyl)imidazole-4-carboxamide (formate route): step 1/1. Functionally, catalyzes the ATP- and formate-dependent formylation of 5-aminoimidazole-4-carboxamide-1-beta-d-ribofuranosyl 5'-monophosphate (AICAR) to 5-formaminoimidazole-4-carboxamide-1-beta-d-ribofuranosyl 5'-monophosphate (FAICAR) in the absence of folates. This Methanosarcina mazei (strain ATCC BAA-159 / DSM 3647 / Goe1 / Go1 / JCM 11833 / OCM 88) (Methanosarcina frisia) protein is 5-formaminoimidazole-4-carboxamide-1-(beta)-D-ribofuranosyl 5'-monophosphate synthetase 1.